The chain runs to 77 residues: Large ribosomal subunit protein bL28 (77 aa).

The segment at 1-20 (MSRVCQVTGKGPVTGNNISH) is disordered.

The protein belongs to the bacterial ribosomal protein bL28 family.

The chain is Large ribosomal subunit protein bL28 from Pseudomonas syringae pv. tomato (strain ATCC BAA-871 / DC3000).